The primary structure comprises 173 residues: NADH-ubiquinone oxidoreductase chain 6 (173 aa).

Transmembrane regions (helical) follow at residues Met-1–Ser-21, Tyr-27–Gly-47, Val-48–Val-68, Val-87–Phe-107, and Cys-139–Leu-159.

The protein belongs to the complex I subunit 6 family.

The protein localises to the mitochondrion membrane. The catalysed reaction is a ubiquinone + NADH + 5 H(+)(in) = a ubiquinol + NAD(+) + 4 H(+)(out). Functionally, core subunit of the mitochondrial membrane respiratory chain NADH dehydrogenase (Complex I) that is believed to belong to the minimal assembly required for catalysis. Complex I functions in the transfer of electrons from NADH to the respiratory chain. The immediate electron acceptor for the enzyme is believed to be ubiquinone. In Ptychoramphus aleuticus (Cassin's auklet), this protein is NADH-ubiquinone oxidoreductase chain 6 (MT-ND6).